Consider the following 638-residue polypeptide: Leucine-rich repeat-containing protein 63 (638 aa).

Disordered stretches follow at residues 220-241 (VPST…PSAA) and 306-325 (TTAA…TVQR). LRR repeat units follow at residues 389 to 412 (AFQL…ILYL), 413 to 435 (QNLQ…IHLL), 437 to 458 (YLRI…LFCL), 460 to 481 (YLEE…IQKL), 482 to 504 (RSLE…ILKL), and 532 to 556 (LTQI…VRKS).

The sequence is that of Leucine-rich repeat-containing protein 63 from Mus musculus (Mouse).